A 511-amino-acid chain; its full sequence is 2'-acyl-2-O-sulfo-trehalose (hydroxy)phthioceranyltransferase PapA1 (511 aa).

This sequence belongs to the PapA acyltransferase family.

The enzyme catalyses a (hydroxy)phthioceranyl-[(hydroxy)phthioceranic acid synthase] + 2'-palmitoyl/stearoyl-2-O-sulfo-alpha,alpha-trehalose = a 3'-(hydroxy)phthioceranyl-2'-palmitoyl/stearoyl-2-O-sulfo-alpha,alpha-trehalose + holo-[(hydroxy)phthioceranic acid synthase].. Its function is as follows. Catalyzes the acylation of trehalose-2-sulfate-2'-palmitate (SL659) by adding the (hydroxy)phthioceranoyl group at the 3'-position to yield the diacylated intermediate 2-palmitoyl-3-(C43)-phthioceranyl-alpha, alpha'-D-trehalose-2'-sulfate (SL1278). This chain is 2'-acyl-2-O-sulfo-trehalose (hydroxy)phthioceranyltransferase PapA1 (papA1), found in Mycobacterium bovis (strain BCG / Pasteur 1173P2).